Here is an 839-residue protein sequence, read N- to C-terminus: Transcription regulator protein BACH2 (839 aa).

The 67-residue stretch at C37–R103 folds into the BTB domain. Disordered regions lie at residues Q150–M170 and H247–S331. The segment covering G161–M170 has biased composition (acidic residues). Polar residues predominate over residues H247–N263. Positions T297–Q312 are enriched in basic and acidic residues. S314 is subject to Phosphoserine. Low complexity predominate over residues T321 to S331. Glycyl lysine isopeptide (Lys-Gly) (interchain with G-Cter in SUMO2) cross-links involve residues K381 and K420. S520 carries the post-translational modification Phosphoserine. Residues Q582–G609 form a disordered region. Positions S583–E597 are enriched in polar residues. In terms of domain architecture, bZIP spans F645 to L708. The tract at residues R650 to K666 is basic motif. The segment at I670–I677 is leucine-zipper. The interval P778 to S813 is disordered. Positions P781 to S790 are enriched in polar residues. The Nuclear export signal signature appears at D819–A839.

Belongs to the bZIP family. CNC subfamily. In terms of assembly, homodimer; disulfide-linked. Heterodimer of BACH2 and Maf-related transcription factors. In terms of processing, the reversible disulfide bond may provide a mechanism to regulate the activity in oxidative stress responses. Phosphorylation at Ser-520 downstream of the PI-3K pathway promotes nuclear export. As to expression, detected in brain and spleen.

It localises to the cytoplasm. It is found in the nucleus. In terms of biological role, transcriptional regulator that acts as a repressor or activator. Binds to Maf recognition elements (MARE). Plays an important role in coordinating transcription activation and repression by MAFK. Induces apoptosis in response to oxidative stress through repression of the antiapoptotic factor HMOX1. Positively regulates the nuclear import of actin. Is a key regulator of adaptive immunity, crucial for the maintenance of regulatory T-cell function and B-cell maturation. This Mus musculus (Mouse) protein is Transcription regulator protein BACH2 (Bach2).